The chain runs to 294 residues: Filamin-B (294 aa).

2 Filamin repeats span residues 1-67 (GTRL…KVRV) and 71-163 (GQAG…KAKV). Serine 61 and serine 157 each carry phosphoserine. A Glycyl lysine isopeptide (Lys-Gly) (interchain with G-Cter in ISG15) cross-link involves residue lysine 160. Positions 164 to 198 (TGQRLVGPGSTNETSSILVESVTRSSTETCYSAIP) are hinge 2. Residues 164-294 (TGQRLVGPGS…PGSPFHVTVP (131 aa)) are self-association site, tail. Residues serine 173 and serine 184 each carry the phosphoserine modification. Residues 199–293 (KASSDASKVT…IPGSPFHVTV (95 aa)) form a Filamin 24 repeat. N6-succinyllysine occurs at positions 210 and 216. Lysine 268 carries the post-translational modification N6-acetyllysine.

The protein belongs to the filamin family. In terms of assembly, homodimer. Interacts with FLNA, FLNC, INPPL1, ITGB1A, ITGB1D, ITGB3, ITGB6, MYOT, MYOZ1, PSEN1 and PSEN2. Interacts with MICALL2. Interacts with RFLNA and RFLNB. Interacts with HTLV-I viral p13 protein. Interacts with ASB2; the interaction targets FLNB for proteasomal degradation. In terms of processing, ISGylation prevents ability to interact with the upstream activators of the JNK cascade and inhibits IFNA-induced JNK signaling. Ubiquitination by a SCF-like complex containing ASB2 leads to proteasomal degradation which promotes muscle differentiation.

The protein resides in the cytoplasm. The protein localises to the cell cortex. It is found in the cytoskeleton. It localises to the myofibril. Its subcellular location is the sarcomere. The protein resides in the z line. Its function is as follows. Connects cell membrane constituents to the actin cytoskeleton. May promote orthogonal branching of actin filaments and links actin filaments to membrane glycoproteins. Anchors various transmembrane proteins to the actin cytoskeleton. The chain is Filamin-B (FLNB) from Oryctolagus cuniculus (Rabbit).